We begin with the raw amino-acid sequence, 127 residues long: Ribosome-binding factor A (127 aa).

This sequence belongs to the RbfA family. As to quaternary structure, monomer. Binds 30S ribosomal subunits, but not 50S ribosomal subunits or 70S ribosomes.

Its subcellular location is the cytoplasm. One of several proteins that assist in the late maturation steps of the functional core of the 30S ribosomal subunit. Associates with free 30S ribosomal subunits (but not with 30S subunits that are part of 70S ribosomes or polysomes). Required for efficient processing of 16S rRNA. May interact with the 5'-terminal helix region of 16S rRNA. In Nitrosococcus oceani (strain ATCC 19707 / BCRC 17464 / JCM 30415 / NCIMB 11848 / C-107), this protein is Ribosome-binding factor A.